A 264-amino-acid polypeptide reads, in one-letter code: Proteasome subunit beta type-4 (264 aa).

Met-1 carries the N-acetylmethionine modification. A propeptide spanning residues Met-1–Arg-45 is cleaved from the precursor. Tyr-102 bears the Phosphotyrosine mark.

It belongs to the peptidase T1B family. The 26S proteasome consists of a 20S proteasome core and two 19S regulatory subunits. The 20S proteasome core is a barrel-shaped complex made of 28 subunits that are arranged in four stacked rings. The two outer rings are each formed by seven alpha subunits, and the two inner rings are formed by seven beta subunits. The proteolytic activity is exerted by three beta-subunits PSMB5, PSMB6 and PSMB7. Forms a ternary complex with SMAD1 and OAZ1 before PSMB4 is incorporated into the 20S proteasome. Interacts with PRPF19.

The protein resides in the cytoplasm. It is found in the nucleus. Functionally, non-catalytic component of the 20S core proteasome complex involved in the proteolytic degradation of most intracellular proteins. This complex plays numerous essential roles within the cell by associating with different regulatory particles. Associated with two 19S regulatory particles, forms the 26S proteasome and thus participates in the ATP-dependent degradation of ubiquitinated proteins. The 26S proteasome plays a key role in the maintenance of protein homeostasis by removing misfolded or damaged proteins that could impair cellular functions, and by removing proteins whose functions are no longer required. Associated with the PA200 or PA28, the 20S proteasome mediates ubiquitin-independent protein degradation. This type of proteolysis is required in several pathways including spermatogenesis (20S-PA200 complex) or generation of a subset of MHC class I-presented antigenic peptides (20S-PA28 complex). SMAD1/OAZ1/PSMB4 complex mediates the degradation of the CREBBP/EP300 repressor SNIP1. The polypeptide is Proteasome subunit beta type-4 (PSMB4) (Bos taurus (Bovine)).